The primary structure comprises 1861 residues: MADERKDEGKAPHWTSASLTEAAAHPHSPEMKDQGGSGEGLSRSANGFPYREEEEGAFGEHGSQGTYSDTKENGINGELTSADRETAEEVSARIVQVVTAEAVAVLKGEQEKEAQHKDQPAALPLAAEETVNLPPSPPPSPASEQTAALEEDLLTASKMEFPEQQKLPSSFAEPLDKEETEFKMQSKPGEDFEHAALVPQPDTSKTPQDKKDPQDMEGEKSPASPFAQTFGTNLEDIKQITEPSITVPSIGLSAEPLAPKDQKDWFIEMPVESKKDEWGLAAPISPGPLTPMREKDVLEDIPRWEGKQFDSPMPSPFHGGSFTLPLDTVKDERVTEGSQPFAPVFFQSDDKMSLQDTSGSATSKESSKDEEPQKDKADKVADVPVSEATTVLGDVHSPAVEGFVGENISGEEKGTTDQEKKETSTPSVQEPTLTETEPQTKLEETSKVSIEETVAKEEESLKLKDDKAGVIQTSTEQSFSKEDQKGQEQTIEALKQDSFPISLEQAVTDAAMATKTLEKVTSEPEAVSEKREIQGLFEEDIADKSKLEGAGSATVAEVEMPFYEDKSGMSKYFETSALKEDVTRSTGLGSDYYELSDSRGNAQESLDTVSPKNQQDEKELLAKASQPSPPAHEAGYSTLAQSYTSDHPSELPEEPSSPQERMFTIDPKVYGEKRDLHSKNKDDLTLSRSLGLGGRSAIEQRSMSINLPMSCLDSIALGFNFGRGHDLSPLASDILTNTSGSMDEGDDYLPPTTPAVEKIPCFPIESKEEEDKTEQAKVTGGQTTQVETSSESPFPAKEYYKNGTVMAPDLPEMLDLAGTRSRLASVSADAEVARRKSVPSEAVVAESSTGLPPVADDSQPVKPDSQLEDMGYCVFNKYTVPLPSPVQDSENLSGESGSFYEGTDDKVRRDLATDLSLIEVKLAAAGRVKDEFTAEKEASPPSSADKSGLSREFDQDRKANDKLDTVLEKSEEHVDSKEHAKESEEVGDKVELFGLGVTYEQTSAKELITTKETAPERAEKGLSSVPEVAEVETTTKADQGLDVAAKKDDQSPLDIKVSDFGQMASGMSVDAGKTIELKFEVDQQLTLSSEAPQETDSFMGIESSHVKDGAKVSETEVKEKVAKPDLVHQEAVDKEESYESSGEHESLTMESLKPDEGKKETSPETSLIQDEVALKLSVEIPCPPPVSEADSSIDEKAEVQMEFIQLPKEESTETPDIPAIPSDVTQPQPEAVVSEPAEVRGEEEEIEAEGEYDKLLFRSDTLQITDLLVPGSREEFVETCPGEHKGVVESVVTIEDDFITVVQTTTDEGELGSHSVRFAAPVQPEEERRPYPHDEELEVLMAAEAQAEPKDGSPDAPATPEKEEVPFSEYKTETYDDYKDETTIDDSIMDADSLWVDTQDDDRSILTEQLETIPKEERAEKEARRPSLEKHRKEKPFKTGRGRISTPERREVAKKEPSTVSRDEVRRKKAVYKKAELAKESEVQAHSPSRKLILKPAIKYTRPTHLSCVKRKTTATSGESAQAPSAFKQAKDKVTDGITKSPEKRSSLPRPSSILPPRRGVSGDREENSFSLNSSISSARRTTRSEPIRRAGKSGTSTPTTPGSTAITPGTPPSYSSRTPGTPGTPSYPRTPGTPKSGILVPSEKKVAIIRTPPKSPATPKQLRLINQPLPDLKNVKSKIGSTDNIKYQPKGGQVRILNKKMDFSKVQSRCGSKDNIKHSAGGGNVQIVTKKIDLSHVTSKCGSLKNIRHRPGGGRVKIESVKLDFKEKAQAKVGSLDNAHHVPGGGNVKIDSQKLNFREHAKARVDHGAEIITQSPSRSSVASPRRLSNVSSSGSINLLESPQLATLAEDVTAALAKQGL.

Residues 1-11 are compositionally biased toward basic and acidic residues; it reads MADERKDEGKA. Disordered stretches follow at residues 1-86 and 109-231; these read MADE…DRET and EQEK…QTFG. Ser28 and Ser37 each carry phosphoserine. Residues 109 to 119 show a composition bias toward basic and acidic residues; that stretch reads EQEKEAQHKDQ. Residues Ser136, Ser140, and Ser143 each carry the phosphoserine modification. 2 stretches are compositionally biased toward basic and acidic residues: residues 174–194 and 207–220; these read PLDK…DFEH and PQDK…EGEK. Ser221, Ser224, Ser285, Gly319, Ser348, and Asp350 each carry phosphoserine. The tract at residues 305–469 is disordered; it reads EGKQFDSPMP…SLKLKDDKAG (165 aa). A compositionally biased stretch (polar residues) spans 354-364; sequence LQDTSGSATSK. A compositionally biased stretch (basic and acidic residues) spans 365–381; the sequence is ESSKDEEPQKDKADKVA. At Asp382 the chain carries Phosphoserine. 2 stretches are compositionally biased toward basic and acidic residues: residues 410–423 and 438–468; these read GEEK…KKET and PQTK…DDKA. Phosphoserine occurs at positions 478, 498, 522, 552, 598, 605, 610, and 628. A disordered region spans residues 575-688; it reads TSALKEDVTR…KNKDDLTLSR (114 aa). Polar residues predominate over residues 598-613; that stretch reads SRGNAQESLDTVSPKN. A compositionally biased stretch (basic and acidic residues) spans 669 to 685; sequence VYGEKRDLHSKNKDDLT. Positions 704 to 747 are interaction with KNDC1; sequence SINLPMSCLDSIALGFNFGRGHDLSPLASDILTNTSGSMDEGDD. 2 positions are modified to phosphoserine: Ser728 and Ser732. Phosphothreonine is present on Thr736. Phosphoserine occurs at positions 739 and 741. A Phosphotyrosine modification is found at Tyr748. Residues 766–775 show a composition bias toward basic and acidic residues; sequence SKEEEDKTEQ. Positions 766–797 are disordered; the sequence is SKEEEDKTEQAKVTGGQTTQVETSSESPFPAK. A compositionally biased stretch (polar residues) spans 780-792; the sequence is GGQTTQVETSSES. Ser825 is subject to Phosphoserine. Disordered regions lie at residues 826 to 866, 884 to 903, 929 to 987, and 1006 to 1026; these read VSAD…PDSQ, SPVQ…YEGT, KDEF…EEVG, and ELIT…SSVP. Over residues 839–848 the composition is skewed to low complexity; that stretch reads PSEAVVAESS. A phosphoserine mark is found at Ser884 and Ser893. Over residues 886–896 the composition is skewed to polar residues; sequence VQDSENLSGES. Basic and acidic residues predominate over residues 929–938; that stretch reads KDEFTAEKEA. Ser939 bears the Phosphoserine mark. The span at 948–987 shows a compositional bias: basic and acidic residues; the sequence is GLSREFDQDRKANDKLDTVLEKSEEHVDSKEHAKESEEVG. A Phosphoserine modification is found at Ser1051. Over residues 1087–1096 the composition is skewed to polar residues; it reads LSSEAPQETD. 4 disordered regions span residues 1087-1170, 1207-1247, 1343-1384, and 1406-1643; these read LSSE…LIQD, PKEE…EEIE, AEAQ…ETTI, and LTEQ…LVPS. Positions 1104–1162 are enriched in basic and acidic residues; sequence SHVKDGAKVSETEVKEKVAKPDLVHQEAVDKEESYESSGEHESLTMESLKPDEGKKETS. 3 positions are modified to phosphoserine: Ser1140, Ser1141, and Ser1146. At Thr1161 the chain carries Phosphothreonine. Residues Ser1162 and Ser1166 each carry the phosphoserine modification. At Ser1353 the chain carries Phosphoserine. Phosphothreonine is present on Thr1359. Basic and acidic residues-rich tracts occupy residues 1360 to 1382 and 1413 to 1431; these read PEKE…KDET and IPKE…LEKH. The span at 1432–1441 shows a compositional bias: basic residues; it reads RKEKPFKTGR. Basic and acidic residues-rich tracts occupy residues 1446 to 1466 and 1473 to 1483; these read TPER…DEVR and KKAELAKESEV. Residues 1454–1474 form a calmodulin-binding region; sequence KKEPSTVSRDEVRRKKAVYKK. Residues 1514-1523 show a composition bias toward polar residues; it reads TATSGESAQA. The segment covering 1529 to 1546 has biased composition (basic and acidic residues); it reads QAKDKVTDGITKSPEKRS. A Phosphoserine modification is found at Ser1541. The span at 1548–1559 shows a compositional bias: low complexity; that stretch reads LPRPSSILPPRR. Ser1562 carries the phosphoserine modification. Composition is skewed to low complexity over residues 1569 to 1580 and 1593 to 1609; these read SFSLNSSISSAR and KSGT…AITP. At Ser1594 the chain carries Phosphoserine. Phosphothreonine is present on residues Thr1608, Thr1611, Thr1622, Thr1625, and Thr1652. A compositionally biased stretch (polar residues) spans 1615-1625; that stretch reads YSSRTPGTPGT. Ser1656 is subject to Phosphoserine. Tau/MAP repeat units lie at residues 1664–1694, 1695–1725, 1726–1756, and 1757–1788; these read RLIN…KGGQ, VRIL…GGGN, VQIV…GGGR, and VKIE…GGGN. The residue at position 1682 (Ser1682) is a Phosphoserine; by MARK1. 5 positions are modified to phosphoserine: Ser1816, Ser1821, Ser1824, Ser1829, and Ser1842. Low complexity predominate over residues 1816–1829; sequence SPSRSSVASPRRLS. A disordered region spans residues 1816-1835; the sequence is SPSRSSVASPRRLSNVSSSG.

In terms of assembly, interacts with KNDC1 (via KIND2); the interaction enhances MAP2 phosphorylation and localizes KNDC1 to dendrites. Interacts with DPYSL5. Post-translationally, phosphorylated at serine residues in K-X-G-S motifs by MAP/microtubule affinity-regulating kinase (MARK1 or MARK2), causing detachment from microtubules, and their disassembly. Isoform 3/MAP2c is probably phosphorylated by PKA at Ser-319, Ser-350 and Ser-382 and by FYN at Tyr-67. The interaction with KNDC1 enhances MAP2 threonine phosphorylation. Expressed in the liver. As to expression, expressed in the entorhinal cortex and hippocampal neuronal cell bodies.

Its subcellular location is the cytoplasm. It localises to the cytoskeleton. The protein resides in the cell projection. The protein localises to the dendrite. Functionally, the exact function of MAP2 is unknown but MAPs may stabilize the microtubules against depolymerization. They also seem to have a stiffening effect on microtubules. This Rattus norvegicus (Rat) protein is Microtubule-associated protein 2 (Map2).